Reading from the N-terminus, the 506-residue chain is Fe(3+)-transport system permease protein FbpB 2 (506 aa).

12 consecutive transmembrane segments (helical) span residues 9–29 (LTLLIILIGLPLCLPFLYVIL), 57–77 (LLMVCVTIGAISLGTFCAFLL), 90–110 (VAMTLPLCIPAFVSGFTWISL), 116–136 (VFWGTIGIMTLSSFPLAYLPV), 174–194 (IGSSILLIALHMLVEFGAVSI), 218–238 (ALLSAVLMAICILIVFGEIFF), 275–295 (IFILSIGVPVIMLIYWLIVGT), 314–334 (FIISGLGALLTVMCALPLVWA), 350–370 (PYLLHAVPGLVIALSLVYFSI), 379–399 (TFFVIIIAYFMLYLPMAQTTL), 428–448 (LTLPAILPGVAAAFALVFLNL), and 480–500 (AAATPYALMLVLFSGIPVFLL). Residues 52 to 233 (LSNTMLLMVC…LMAICILIVF (182 aa)) form the ABC transmembrane type-1 1 domain. The ABC transmembrane type-1 2 domain maps to 310–500 (FSNSFIISGL…LFSGIPVFLL (191 aa)).

This sequence belongs to the binding-protein-dependent transport system permease family. FbpB subfamily. The complex is composed of two ATP-binding proteins (FbpC), two transmembrane proteins (FbpB) and a solute-binding protein (FbpA).

It is found in the cell inner membrane. Its function is as follows. Part of the ABC transporter complex FbpABC (TC 3.A.1.10.1) involved in Fe(3+) ions import. Probably responsible for the translocation of the substrate across the membrane. The chain is Fe(3+)-transport system permease protein FbpB 2 (fbpB2) from Haemophilus influenzae (strain ATCC 51907 / DSM 11121 / KW20 / Rd).